The sequence spans 474 residues: ABHD16B (474 aa).

Residues 175-293 form the AB hydrolase-1 domain; it reads VICCEGNAGF…MPQSWKGLVV (119 aa). Catalysis depends on charge relay system residues serine 248, aspartate 323, and histidine 423.

It belongs to the AB hydrolase superfamily. ABHD16 family.

The catalysed reaction is a 1,2-diacyl-sn-glycero-3-phospho-L-serine + H2O = a 2-acyl-sn-glycero-3-phospho-L-serine + a fatty acid + H(+). The enzyme catalyses a 1-acylglycerol + H2O = glycerol + a fatty acid + H(+). It carries out the reaction 1-(9Z-octadecenoyl)-glycerol + H2O = glycerol + (9Z)-octadecenoate + H(+). Hydrolyzes the sn-1 position of glycerophospholipids with high specificity towards phosphatidylserine (PS), PS-PLA1 enzyme. Also hydrolyzes the acyl chain of glycerolipids with a preference for the monoacylglycerol (MAG) 1-acylglycerol, MAG lipase. Plays a regulatory role in cellular lipid homeostasis by modulating genes involved in neutral lipid degradation and in phospholipid synthesis and composition. The chain is ABHD16B from Rattus norvegicus (Rat).